The chain runs to 407 residues: Phosphopentomutase (407 aa).

The Mn(2+) site is built by aspartate 11, aspartate 305, histidine 310, aspartate 346, histidine 347, and histidine 358.

It belongs to the phosphopentomutase family. Mn(2+) is required as a cofactor.

Its subcellular location is the cytoplasm. The enzyme catalyses 2-deoxy-alpha-D-ribose 1-phosphate = 2-deoxy-D-ribose 5-phosphate. It catalyses the reaction alpha-D-ribose 1-phosphate = D-ribose 5-phosphate. It participates in carbohydrate degradation; 2-deoxy-D-ribose 1-phosphate degradation; D-glyceraldehyde 3-phosphate and acetaldehyde from 2-deoxy-alpha-D-ribose 1-phosphate: step 1/2. Its function is as follows. Isomerase that catalyzes the conversion of deoxy-ribose 1-phosphate (dRib-1-P) and ribose 1-phosphate (Rib-1-P) to deoxy-ribose 5-phosphate (dRib-5-P) and ribose 5-phosphate (Rib-5-P), respectively. The sequence is that of Phosphopentomutase from Legionella pneumophila (strain Corby).